The following is a 152-amino-acid chain: Protein SprT-like (152 aa).

The region spanning 6 to 151 is the SprT-like domain; that stretch reads LQQLVCRISL…SKCLGKLELL (146 aa). Histidine 67 contributes to the Zn(2+) binding site. Glutamate 68 is an active-site residue. Histidine 71 lines the Zn(2+) pocket.

Belongs to the SprT family. Zn(2+) is required as a cofactor.

The protein resides in the cytoplasm. This Lysinibacillus sphaericus (strain C3-41) protein is Protein SprT-like.